We begin with the raw amino-acid sequence, 232 residues long: Large ribosomal subunit protein uL1 (232 aa).

This sequence belongs to the universal ribosomal protein uL1 family. In terms of assembly, part of the 50S ribosomal subunit.

Functionally, binds directly to 23S rRNA. The L1 stalk is quite mobile in the ribosome, and is involved in E site tRNA release. In terms of biological role, protein L1 is also a translational repressor protein, it controls the translation of the L11 operon by binding to its mRNA. This is Large ribosomal subunit protein uL1 from Chlamydia trachomatis serovar L2b (strain UCH-1/proctitis).